We begin with the raw amino-acid sequence, 83 residues long: Putative membrane protein insertion efficiency factor (83 aa).

The interval 63-83 (GGNDPVPDHFSLRRNKTDISD) is disordered. The span at 68-83 (VPDHFSLRRNKTDISD) shows a compositional bias: basic and acidic residues.

The protein belongs to the UPF0161 family.

It localises to the cell membrane. Its function is as follows. Could be involved in insertion of integral membrane proteins into the membrane. This is Putative membrane protein insertion efficiency factor from Streptococcus agalactiae serotype III (strain NEM316).